Here is a 691-residue protein sequence, read N- to C-terminus: Probable serine/threonine-protein kinase pXi (691 aa).

Positions 18–263 (YEIGSQIGNG…IDQTLKHPWI (246 aa)) constitute a Protein kinase domain. ATP is bound by residues 24–32 (IGNGKFAQV) and K47. Catalysis depends on D137, which acts as the Proton acceptor. 4 disordered regions span residues 314 to 350 (TPIKSNDENNNNNNNNNNNNNNNEILDKKSNENENEN), 420 to 447 (ENDSSSSETYSSSSPIENGGGGGDKFTS), 510 to 536 (QHNNNINNNNNNINNGGSTSINNGNGT), and 600 to 620 (GGSGCSSSSDESTGGSFKKDK). Residues 322–336 (NNNNNNNNNNNNNNN) are compositionally biased toward low complexity. The span at 338–350 (ILDKKSNENENEN) shows a compositional bias: basic and acidic residues. Composition is skewed to low complexity over residues 423-433 (SSSSETYSSSS), 512-536 (NNNINNNNNNINNGGSTSINNGNGT), and 600-615 (GGSGCSSSSDESTGGS). Positions 642-691 (PKETMDKLASVLSNYKQKNQEKSLKVKYEKQKDKYKKLKSQLKKDKSLLK) form a coiled coil.

This sequence belongs to the protein kinase superfamily. CAMK Ser/Thr protein kinase family.

The enzyme catalyses L-seryl-[protein] + ATP = O-phospho-L-seryl-[protein] + ADP + H(+). It catalyses the reaction L-threonyl-[protein] + ATP = O-phospho-L-threonyl-[protein] + ADP + H(+). The protein is Probable serine/threonine-protein kinase pXi (pXi) of Dictyostelium discoideum (Social amoeba).